A 258-amino-acid chain; its full sequence is Probable parvulin-type peptidyl-prolyl cis-trans isomerase (258 aa).

An N-terminal signal peptide occupies residues 1–19 (MKRIAMLAAACVIAVPAFA). The region spanning 127–219 (KMEYKVRHIL…FGWHVIQVDD (93 aa)) is the PpiC domain. Basic and acidic residues predominate over residues 158–175 (DDLAKKNSKDPGSAERGG). The disordered stretch occupies residues 158-178 (DDLAKKNSKDPGSAERGGDLG).

This sequence belongs to the PpiC/parvulin rotamase family.

It carries out the reaction [protein]-peptidylproline (omega=180) = [protein]-peptidylproline (omega=0). The sequence is that of Probable parvulin-type peptidyl-prolyl cis-trans isomerase from Bordetella bronchiseptica (strain ATCC BAA-588 / NCTC 13252 / RB50) (Alcaligenes bronchisepticus).